A 435-amino-acid chain; its full sequence is Nicotinate phosphoribosyltransferase (435 aa).

Phosphohistidine; by autocatalysis is present on H230.

Belongs to the NAPRTase family. In terms of processing, transiently phosphorylated on a His residue during the reaction cycle. Phosphorylation strongly increases the affinity for substrates and increases the rate of nicotinate D-ribonucleotide production. Dephosphorylation regenerates the low-affinity form of the enzyme, leading to product release.

It carries out the reaction nicotinate + 5-phospho-alpha-D-ribose 1-diphosphate + ATP + H2O = nicotinate beta-D-ribonucleotide + ADP + phosphate + diphosphate. The protein operates within cofactor biosynthesis; NAD(+) biosynthesis; nicotinate D-ribonucleotide from nicotinate: step 1/1. Functionally, catalyzes the synthesis of beta-nicotinate D-ribonucleotide from nicotinate and 5-phospho-D-ribose 1-phosphate at the expense of ATP. This Vibrio cholerae serotype O1 (strain ATCC 39541 / Classical Ogawa 395 / O395) protein is Nicotinate phosphoribosyltransferase.